The chain runs to 538 residues: Carboxypeptidase 2 (538 aa).

The N-terminal stretch at 1-21 is a signal peptide; that stretch reads MVAYRFLTLISLGLGSHCASA. Asn46 carries N-linked (GlcNAc...) asparagine glycosylation. Residues 53-76 are disordered; the sequence is PAFTSPGTVPRGFSDGTSGPTRDE. One can recognise a Peptidase M14 domain in the interval 71–351; that stretch reads GPTRDETMEG…VMVKSILQTA (281 aa). Zn(2+) is bound by residues His136, Glu139, and His224. Glu322 acts as the Proton donor/acceptor in catalysis. N-linked (GlcNAc...) asparagine glycosylation is found at Asn393 and Asn459.

This sequence belongs to the peptidase M14 family. Zn(2+) serves as cofactor.

It localises to the secreted. Extracellular metalloprotease that contributes to pathogenicity. The sequence is that of Carboxypeptidase 2 (MCPB) from Trichophyton tonsurans (Scalp ringworm fungus).